The primary structure comprises 545 residues: Degenerin-like protein asic-2 (545 aa).

The Cytoplasmic portion of the chain corresponds to 1 to 34 (MRGGGFVQIFKDFSNWSTVAVVPHVANANNKISR). The chain crosses the membrane as a helical span at residues 35–55 (IFWIAIFLFVLGMFAYELYIL). Residues 56–457 (IAKFFSYPAT…NVINDLGGQA (402 aa)) are Extracellular-facing. A disulfide bridge links cysteine 83 with cysteine 191. A glycan (N-linked (GlcNAc...) asparagine) is linked at asparagine 201. Cystine bridges form between cysteine 284–cysteine 370, cysteine 305–cysteine 366, cysteine 309–cysteine 364, cysteine 318–cysteine 343, and cysteine 320–cysteine 334. Asparagine 350 is a glycosylation site (N-linked (GlcNAc...) asparagine). A helical transmembrane segment spans residues 458-478 (GLWLGLSVISVVEMTGLMLVM). The GAS motif; ion selectivity filter signature appears at 462 to 464 (GLS). Residues 479–545 (GAFCVTGGAI…NKGDEEKKKK (67 aa)) lie on the Cytoplasmic side of the membrane. Basic and acidic residues-rich tracts occupy residues 514 to 523 (DHLEKKHGEM) and 534 to 545 (IENKGDEEKKKK). A disordered region spans residues 514 to 545 (DHLEKKHGEMESGSDGEVDDIENKGDEEKKKK).

The protein belongs to the amiloride-sensitive sodium channel (TC 1.A.6) family. Can form homotrimers. Heterotrimer; forms functional heterotrimers producing channel with different properties.

It localises to the cell membrane. The catalysed reaction is Na(+)(in) = Na(+)(out). Its activity is regulated as follows. Inhibited by the diuretic drug amiloride. Functionally, could form pH-gated heterotrimeric sodium channels that act as postsynaptic excitatory sensors in the nervous system, generating rapid, transient inward currents that fully desensitize upon extracellular acidification. The chain is Degenerin-like protein asic-2 (asic-2) from Caenorhabditis elegans.